A 314-amino-acid polypeptide reads, in one-letter code: Probable phytol kinase 1, chloroplastic (314 aa).

The N-terminal 62 residues, 1–62 (MAAAARPVDV…GVGAAAAPAV (62 aa)), are a transit peptide targeting the chloroplast. A run of 7 helical transmembrane segments spans residues 72–91 (AALR…YSLV), 111–131 (IVHV…SNST), 135–155 (FFAA…GLRL), 181–201 (YVIV…IGIV), 234–254 (IGSI…LFYF), 266–286 (LALG…CIPV), and 294–314 (ISVP…SSCC).

Belongs to the polyprenol kinase family.

Its subcellular location is the plastid. It localises to the chloroplast membrane. It carries out the reaction phytol + CTP = phytyl phosphate + CDP + H(+). It participates in cofactor biosynthesis; tocopherol biosynthesis. Functionally, involved in the activation and reutilization of phytol from chlorophyll degradation in plant metabolism, including tocopherol biosynthesis. Catalyzes the conversion of phytol to phytol monophosphate (PMP). In Oryza sativa subsp. japonica (Rice), this protein is Probable phytol kinase 1, chloroplastic.